Reading from the N-terminus, the 493-residue chain is Malonyl-CoA decarboxylase, mitochondrial (493 aa).

The N-terminal 39 residues, 1-39, are a transit peptide targeting the mitochondrion; the sequence is MRGFGPGLTARRLLPLRLPPRPPGPRLASGQAAGALERA. The alpha-helical domain stretch occupies residues 40–190; sequence MDELLRRAVP…VLKGMLSEWF (151 aa). Lysine 59 bears the N6-acetyllysine mark. Lysine 168 is subject to N6-acetyllysine; alternate. An N6-succinyllysine; alternate modification is found at lysine 168. A catalytic domain region spans residues 191–493; sequence SSGFLNLERV…VAQFQKNSKL (303 aa). The residue at position 211 (lysine 211) is an N6-acetyllysine. Lysine 222 is subject to N6-succinyllysine. Malonyl-CoA is bound by residues 299–305 and serine 329; that span reads QGVELGT. Residue serine 329 is the Proton acceptor of the active site. Lysine 389 carries the N6-acetyllysine modification. Histidine 423 serves as a coordination point for malonyl-CoA. Histidine 423 (proton donor) is an active-site residue. The residue at position 472 (lysine 472) is an N6-acetyllysine. A Microbody targeting signal motif is present at residues 491-493; that stretch reads SKL.

Homotetramer. Dimer of dimers. The two subunits within a dimer display conformational differences suggesting that at any given moment, only one of the two subunits is competent for malonyl-CoA binding and catalytic activity. Under oxidizing conditions, can form disulfide-linked homotetramers (in vitro). Associates with the peroxisomal targeting signal receptor PEX5. Acetylation at Lys-472 activates malonyl-CoA decarboxylase activity. Deacetylation at Lys-472 by SIRT4 represses activity, leading to promote lipogenesis. Post-translationally, interchain disulfide bonds may form in peroxisomes (Potential). Interchain disulfide bonds are not expected to form in the reducing environment of the cytoplasm and mitochondria. In terms of tissue distribution, expressed in fibroblasts and hepatoblastoma cells (at protein level). Expressed strongly in heart, liver, skeletal muscle, kidney and pancreas. Expressed in myotubes. Expressed weakly in brain, placenta, spleen, thymus, testis, ovary and small intestine.

The protein localises to the cytoplasm. Its subcellular location is the mitochondrion matrix. The protein resides in the peroxisome. It localises to the peroxisome matrix. It catalyses the reaction malonyl-CoA + H(+) = acetyl-CoA + CO2. The protein operates within metabolic intermediate biosynthesis; acetyl-CoA biosynthesis; acetyl-CoA from malonyl-CoA: step 1/1. With respect to regulation, malonyl-CoA decarboxylase activity does not require any cofactors or divalent metal ions. Formation of interchain disulfide bonds leads to positive cooperativity between active sites and increases the affinity for malonyl-CoA and the catalytic efficiency (in vitro). Catalyzes the conversion of malonyl-CoA to acetyl-CoA. In the fatty acid biosynthesis MCD selectively removes malonyl-CoA and thus assures that methyl-malonyl-CoA is the only chain elongating substrate for fatty acid synthase and that fatty acids with multiple methyl side chains are produced. In peroxisomes it may be involved in degrading intraperoxisomal malonyl-CoA, which is generated by the peroxisomal beta-oxidation of odd chain-length dicarboxylic fatty acids. Plays a role in the metabolic balance between glucose and lipid oxidation in muscle independent of alterations in insulin signaling. May play a role in controlling the extent of ischemic injury by promoting glucose oxidation. In Homo sapiens (Human), this protein is Malonyl-CoA decarboxylase, mitochondrial.